The following is a 275-amino-acid chain: Large ribosomal subunit protein uL2 (275 aa).

The span at Ser38–His53 shows a compositional bias: polar residues. Disordered regions lie at residues Ser38–Lys59 and Ala224–Arg257.

The protein belongs to the universal ribosomal protein uL2 family. In terms of assembly, part of the 50S ribosomal subunit. Forms a bridge to the 30S subunit in the 70S ribosome.

Its function is as follows. One of the primary rRNA binding proteins. Required for association of the 30S and 50S subunits to form the 70S ribosome, for tRNA binding and peptide bond formation. It has been suggested to have peptidyltransferase activity; this is somewhat controversial. Makes several contacts with the 16S rRNA in the 70S ribosome. The chain is Large ribosomal subunit protein uL2 from Burkholderia multivorans (strain ATCC 17616 / 249).